We begin with the raw amino-acid sequence, 55 residues long: ATP synthase F(0) complex subunit 8 (55 aa).

A helical membrane pass occupies residues 10-32; the sequence is FFTMLTTWLTFLLLIQPKLLSFI.

Belongs to the ATPase protein 8 family. Component of the ATP synthase complex composed at least of ATP5F1A/subunit alpha, ATP5F1B/subunit beta, ATP5MC1/subunit c (homooctomer), MT-ATP6/subunit a, MT-ATP8/subunit 8, ATP5ME/subunit e, ATP5MF/subunit f, ATP5MG/subunit g, ATP5MK/subunit k, ATP5MJ/subunit j, ATP5F1C/subunit gamma, ATP5F1D/subunit delta, ATP5F1E/subunit epsilon, ATP5PF/subunit F6, ATP5PB/subunit b, ATP5PD/subunit d, ATP5PO/subunit OSCP. ATP synthase complex consists of a soluble F(1) head domain (subunits alpha(3) and beta(3)) - the catalytic core - and a membrane F(0) domain - the membrane proton channel (subunits c, a, 8, e, f, g, k and j). These two domains are linked by a central stalk (subunits gamma, delta, and epsilon) rotating inside the F1 region and a stationary peripheral stalk (subunits F6, b, d, and OSCP).

It localises to the mitochondrion membrane. In terms of biological role, subunit 8, of the mitochondrial membrane ATP synthase complex (F(1)F(0) ATP synthase or Complex V) that produces ATP from ADP in the presence of a proton gradient across the membrane which is generated by electron transport complexes of the respiratory chain. ATP synthase complex consist of a soluble F(1) head domain - the catalytic core - and a membrane F(1) domain - the membrane proton channel. These two domains are linked by a central stalk rotating inside the F(1) region and a stationary peripheral stalk. During catalysis, ATP synthesis in the catalytic domain of F(1) is coupled via a rotary mechanism of the central stalk subunits to proton translocation. In vivo, can only synthesize ATP although its ATP hydrolase activity can be activated artificially in vitro. Part of the complex F(0) domain. This chain is ATP synthase F(0) complex subunit 8, found in Guira guira (Guira cuckoo).